Here is a 440-residue protein sequence, read N- to C-terminus: MKETPLSNCERRFLLRAIEEKKRLDGRQTYDYRNIKISFGTDYGCCIVELGKTRVLGQVSCELVSPKLNRATEGILFFNLELSQMAAPAFEPGRQSDLLVKLNRLLERCLRNSKCIDTESLCVVAGEKVWQIRVDLHLLNHDGNIIDAASIAAIVALCHFRRPDVSVQGDEVTLYTLEERDPVPLSIHHMPICVSFAFFQQGTYLLVDPSEREERVMDGLLVIAMNKHREICTIQSSGGIMLLKDQVLRCSKIAGVKVVEITELIQKALENDQKVRKEGGKFGFVESMANQRITAFKMEKAPIDTSDVEEKAEEIISEAEPPSEVVSKPVLWTPGTAQIGEGIENSWGHLEDSEKEDEDEGGSDEAIILDGMKMDTGVEVSNIGSQDAPIVLSDSEEEEMIILEPDKNPKKIRTQTISATQVKAPSKKPVKKRKKKRAAN.

S65 is subject to Phosphoserine. Position 297 is an N6-acetyllysine; alternate (K297). A Glycyl lysine isopeptide (Lys-Gly) (interchain with G-Cter in SUMO1); alternate cross-link involves residue K297. Residue K297 forms a Glycyl lysine isopeptide (Lys-Gly) (interchain with G-Cter in SUMO2); alternate linkage. S306 and S346 each carry phosphoserine. The tract at residues 341 to 362 (EGIENSWGHLEDSEKEDEDEGG) is disordered. Positions 353–362 (SEKEDEDEGG) are enriched in acidic residues. Phosphoserine occurs at positions 393 and 395. Residues 404-440 (EPDKNPKKIRTQTISATQVKAPSKKPVKKRKKKRAAN) are disordered. Basic residues predominate over residues 425 to 440 (PSKKPVKKRKKKRAAN).

It belongs to the RNase PH family. As to quaternary structure, component of the RNA exosome core complex (Exo-9), composed of EXOSC1, EXOSC2, EXOSC3, EXOSC4, EXOSC5, EXOSC6, EXOSC7, EXOSC8 and EXOSC9; within the complex interacts with EXOSC3, EXOSC4, EXOSC5 and DIS3. The catalytically inactive RNA exosome core complex (Exo-9) associates with the catalytic subunit EXOSC10/RRP6. Exo-9 may associate with DIS3 to form the nucleolar exosome complex, or DIS3L to form the cytoplasmic exosome complex. Exo-9 is formed by a hexameric base ring consisting of the heterodimers EXOSC4-EXOSC9, EXOSC5-EXOSC8 and EXOSC6-EXOSC7, and a cap ring consisting of EXOSC1, EXOSC2 and EXOSC3. The RNA exosome complex associates with cofactors C1D/RRP47, MPHOSPH6/MPP6 and MTREX/MTR4. Interacts (via C-terminus region) with SETX (via N-terminus domain); the interaction enhances SETX sumoylation. Interacts with DIS3; the interaction is direct.

Its subcellular location is the cytoplasm. The protein resides in the nucleus. It is found in the nucleolus. It localises to the nucleoplasm. Non-catalytic component of the RNA exosome complex which has 3'-&gt;5' exoribonuclease activity and participates in a multitude of cellular RNA processing and degradation events. In the nucleus, the RNA exosome complex is involved in proper maturation of stable RNA species such as rRNA, snRNA and snoRNA, in the elimination of RNA processing by-products and non-coding 'pervasive' transcripts, such as antisense RNA species and promoter-upstream transcripts (PROMPTs), and of mRNAs with processing defects, thereby limiting or excluding their export to the cytoplasm. The RNA exosome may be involved in Ig class switch recombination (CSR) and/or Ig variable region somatic hypermutation (SHM) by targeting AICDA deamination activity to transcribed dsDNA substrates. In the cytoplasm, the RNA exosome complex is involved in general mRNA turnover and specifically degrades inherently unstable mRNAs containing AU-rich elements (AREs) within their 3' untranslated regions, and in RNA surveillance pathways, preventing translation of aberrant mRNAs. It seems to be involved in degradation of histone mRNA. The catalytic inactive RNA exosome core complex of 9 subunits (Exo-9) is proposed to play a pivotal role in the binding and presentation of RNA for ribonucleolysis, and to serve as a scaffold for the association with catalytic subunits and accessory proteins or complexes. EXOSC9 binds to ARE-containing RNAs. The chain is Exosome complex component RRP45 (EXOSC9) from Bos taurus (Bovine).